Here is a 210-residue protein sequence, read N- to C-terminus: Probable glutathione peroxidase 8 (210 aa).

The helical transmembrane segment at 13–35 (ASRAGLFKVLLSVALCMGSLYLL) threads the bilayer.

It belongs to the glutathione peroxidase family.

The protein localises to the membrane. It carries out the reaction 2 glutathione + H2O2 = glutathione disulfide + 2 H2O. This chain is Probable glutathione peroxidase 8 (gpx8), found in Danio rerio (Zebrafish).